A 479-amino-acid chain; its full sequence is NADH oxidase (479 aa).

FAD-binding positions include Gly-8 to Ala-12, Asp-33, Cys-43, Val-80, Ala-111 to Ala-114, Lys-149, and Tyr-177. The active-site Proton acceptor is the His-11. The Redox-active role is filled by Cys-43. The residue at position 43 (Cys-43) is a Cysteine sulfinic acid (-SO2H). Residues Val-170–Ala-185, Asp-197, and Gly-264 contribute to the NAD(+) site. Residues Leu-295 to Gly-305, Leu-322, Ala-323, and Thr-324 each bind FAD. Ala-353 contacts NAD(+). Phe-450 serves as a coordination point for FAD.

The protein belongs to the class-III pyridine nucleotide-disulfide oxidoreductase family. Requires FAD as cofactor.

The catalysed reaction is 2 NADH + O2 + 2 H(+) = 2 NAD(+) + 2 H2O. Catalyzes the four-electron reduction of molecular oxygen to water. This Mycoplasma pneumoniae (strain ATCC 29342 / M129 / Subtype 1) (Mycoplasmoides pneumoniae) protein is NADH oxidase (nox).